The following is a 307-amino-acid chain: Plastid division protein PDV2 (307 aa).

Met1 is subject to N-acetylmethionine. At 1-213 (MEDEEGIGLI…SGGSSHGVIR (213 aa)) the chain is on the cytoplasmic side. Residues 28–66 (SSTTVSDNGDGNEDLSPGEGRKSEIIGNQDKDFDSISSE) form a disordered region. Basic and acidic residues predominate over residues 46-61 (EGRKSEIIGNQDKDFD). The residue at position 50 (Ser50) is a Phosphoserine. The stretch at 76–103 (LLRIRDALEALESQLASLQNLRQRQQYE) forms a coiled coil. A disordered region spans residues 174–206 (HLPSKKKSDANGFGSGHVRNEAEAKSPNGGSGG). The helical transmembrane segment at 214–234 (FLGSVAKIVLPIIGVISLLSA) threads the bilayer. Over 235-307 (SGYGPEMRKR…AKRDVTYGYG (73 aa)) the chain is Chloroplast intermembrane. The segment at 235–307 (SGYGPEMRKR…AKRDVTYGYG (73 aa)) is ARC6 binding.

As to quaternary structure, interacts (via C-terminus) with ARC6 (via C-terminus) in the chloroplast intermembrane space; this interaction induces ARC6 homodimerization and leads to the formation of a heterotetramer containing two ARC6 and two PDV2 subunits. Interacts with ARC5/DRP5B. In terms of tissue distribution, mostly expressed in young leaves.

It localises to the plastid. The protein localises to the chloroplast outer membrane. Its function is as follows. Component of the plastid division machinery consisting in a binary fission accomplished by the simultaneous constriction of the FtsZ ring on the stromal side of the inner envelope membrane, and the ARC5/DRP5B ring on the cytosolic side of the outer envelope membrane. Positive factor of chloroplast division required, with a dosage effect, to mediate the recruitment and dimerization of ARC5/DRP5B at the midplastid constriction site in the cytoplasm at plastid outer envelope membranes (OEMs). Prevents ARC5/DRP5B GTPase acrivity. Relays plastid division site position between stroma and outer surface via interactions with the cytoplasmic ARC5/DRP5B and the inner membrane ARC6 that recruits stromal FtsZ ring. Binding to phosphatidylinositol 4-phosphate (PI4P) modulates negatively chloroplast division. The chain is Plastid division protein PDV2 from Arabidopsis thaliana (Mouse-ear cress).